Consider the following 326-residue polypeptide: Tumor necrosis factor soluble receptor (326 aa).

The N-terminal stretch at 1–16 is a signal peptide; it reads MFRLTLLLAYVACVYG. TNFR-Cys repeat units lie at residues 27 to 62, 63 to 104, 105 to 147, and 148 to 186; these read KCRGNDYEKDGLCCTSCPPGSYASRLCGPGSDTVCS, PCKN…DRVC, DCSA…VLCT, and KCPRYTYSDAVSSTETCTSSFNYISVEFNLYPVNDTSCT. Disulfide bonds link C28/C39, C40/C53, C43/C61, C64/C79, C82/C96, C86/C104, C106/C120, C123/C146, C129/C149, and C164/C185. An N-linked (GlcNAc...) asparagine; by host glycan is attached at N66. N181, N205, and N238 each carry an N-linked (GlcNAc...) asparagine; by host glycan.

Functionally, binds to TNF-alpha and beta. Probably prevents TNF to reach cellular target and thereby deampening the potential antiviral effects of the cytokine. The protein is Tumor necrosis factor soluble receptor of Oryctolagus cuniculus (Rabbit).